A 298-amino-acid chain; its full sequence is MSVVSSVTVKVPGTTANLGPGFDCIGAALTIYNQFQFTRLEESGLIIQATGAEAERVPTDESNLIYQAFAKLYQYIDQPAPGVKIEIELGVPLARGLGSSATAIVAANRLAGEPLSQAQVMALAIAIEGHPDNVVPALLGGCRLAATGASGWEICDVPWHSHIVPVLAIPDFELSTSEARRVLPTEYSRADAIFNTAHLGLLLRGLETGKGEWLRAALQDKLHQPYRQALIPGYDAVNTAAVAAGAYGMVISGAGPTLLALADVSHAAAVEAAMSTAWQEAGITAVVRSLALDTHGAT.

92–102 (PLARGLGSSAT) contributes to the ATP binding site.

The protein belongs to the GHMP kinase family. Homoserine kinase subfamily.

It is found in the cytoplasm. The enzyme catalyses L-homoserine + ATP = O-phospho-L-homoserine + ADP + H(+). It participates in amino-acid biosynthesis; L-threonine biosynthesis; L-threonine from L-aspartate: step 4/5. Its function is as follows. Catalyzes the ATP-dependent phosphorylation of L-homoserine to L-homoserine phosphate. This Nostoc sp. (strain PCC 7120 / SAG 25.82 / UTEX 2576) protein is Homoserine kinase (thrB).